The primary structure comprises 635 residues: Transcription termination factor FttA (635 aa).

KHa stretches follow at residues 1-69 (MSAE…PSVL) and 4-69 (EDIL…PSVL). Residues 70–137 (VEPDIAKDKI…WAPKPVRTPP (68 aa)) form a KHb region. Metallo-beta-lactamase N-terminus stretches follow at residues 179–382 (WVRT…YGGY) and 179–383 (WVRT…GGYD). Beta-Casp stretches follow at residues 180–577 (VRTS…GFSG) and 383–576 (DDVL…EGFS). 6 residues coordinate Zn(2+): His241, His243, Asp245, His246, His328, and Asp351. Metallo-beta-lactamase C-terminus stretches follow at residues 577 to 635 (GHSD…IRLR) and 578 to 635 (HSDR…IRLR). Zn(2+) is bound at residue His602.

Belongs to the metallo-beta-lactamase superfamily. RNA-metabolizing metallo-beta-lactamase-like family. FttA subfamily. In terms of assembly, homodimer. Interacts with RNA polymerase (RNAP); interaction is not dependent on DNA or RNA. Interacts with the Spt4-Spt5 complex. The cofactor is Zn(2+).

It localises to the chromosome. In terms of biological role, terminates transcription on the whole genome. Termination is linked to FttA-mediated RNA cleavage and does not require NTP hydrolysis. Cleaves endonucleolytically at the RNA exit channel of RNA polymerase (RNAP); the 5'-3' exonuclease activity of this protein degrades the nascent RNA released from RNAP. Its function is as follows. Terminates transcription genome-wide. Transcription termination is most effective in vivo on RNAs with more than one U4-tract in their 3'-ends (including non-protein coding RNAs); U4-tracts are recognized by this protein. Also plays a role in termination of RNAs without U-tracts by an unknown mechanism. Has endonuclease activity after U-rich tracts in transcription termination sites. Binds RNA at U4-tracts found directly upstream of the experimentally determined transcription termination sites; binds preferentially to RNAs with more U4-tracts at their 3'-ends. In Methanococcus maripaludis (strain DSM 14266 / JCM 13030 / NBRC 101832 / S2 / LL), this protein is Transcription termination factor FttA.